The primary structure comprises 529 residues: Peptide chain release factor 3 (529 aa).

Residues 11–280 enclose the tr-type G domain; sequence SKRRTFAIIS…GLTEWAPAPK (270 aa). GTP is bound by residues 20-27, 88-92, and 142-145; these read SHPDAGKT, DTPGH, and NKLD.

Belongs to the TRAFAC class translation factor GTPase superfamily. Classic translation factor GTPase family. PrfC subfamily.

The protein localises to the cytoplasm. In terms of biological role, increases the formation of ribosomal termination complexes and stimulates activities of RF-1 and RF-2. It binds guanine nucleotides and has strong preference for UGA stop codons. It may interact directly with the ribosome. The stimulation of RF-1 and RF-2 is significantly reduced by GTP and GDP, but not by GMP. In Vibrio campbellii (strain ATCC BAA-1116), this protein is Peptide chain release factor 3.